The following is a 333-amino-acid chain: C4-dicarboxylate-binding periplasmic protein DctP (333 aa).

The signal sequence occupies residues methionine 1–alanine 26.

It belongs to the bacterial solute-binding protein 7 family. As to quaternary structure, the complex comprises the extracytoplasmic solute receptor protein DctP, and the two transmembrane proteins DctQ and DctM.

The protein localises to the periplasm. In terms of biological role, part of the tripartite ATP-independent periplasmic (TRAP) transport system DctPQM involved in C4-dicarboxylates uptake. Binds C4-dicarboxylates such as fumarate, succinate, L-malate and D-malate. The polypeptide is C4-dicarboxylate-binding periplasmic protein DctP (Rhodobacter capsulatus (Rhodopseudomonas capsulata)).